The sequence spans 567 residues: Thiol:disulfide interchange protein DsbD (567 aa).

Residues 1-19 (MAQRIFTLILLLCSTSAFA) form the signal peptide. Cystine bridges form between cysteine 122–cysteine 128 and cysteine 185–cysteine 307. The next 7 helical transmembrane spans lie at 170-192 (ALWALLIGIGIAFTPCVLPMYPL), 212-234 (LAFIYVQGMALTYTALGLVVAAA), 246-268 (YVLIGLAIVFTLLALSMFGLFTL), 297-319 (GAIAGLICSPCTTAPLSAILLYI), 326-348 (WLGGGTLYLYALGMGLPLMLVTV), 358-380 (GPWMAHVKTAFGFVILALPVFLL), and 387-409 (AWGLRLWSLLGVAFFGWAFITSL). The Thioredoxin domain occupies 435–567 (QDWAFGSPSA…FSAHLHDRQP (133 aa)). An intrachain disulfide couples cysteine 482 to cysteine 485.

It belongs to the thioredoxin family. DsbD subfamily.

Its subcellular location is the cell inner membrane. The catalysed reaction is [protein]-dithiol + NAD(+) = [protein]-disulfide + NADH + H(+). It catalyses the reaction [protein]-dithiol + NADP(+) = [protein]-disulfide + NADPH + H(+). Its function is as follows. Required to facilitate the formation of correct disulfide bonds in some periplasmic proteins and for the assembly of the periplasmic c-type cytochromes. Acts by transferring electrons from cytoplasmic thioredoxin to the periplasm. This transfer involves a cascade of disulfide bond formation and reduction steps. The polypeptide is Thiol:disulfide interchange protein DsbD (Salmonella typhi).